The primary structure comprises 379 residues: Succinate--CoA ligase [ADP-forming] subunit beta (379 aa).

Residues 9–236 (KEIARKYGIE…GRDATPYEKV (228 aa)) enclose the ATP-grasp domain. ATP-binding positions include Lys-46, 53–55 (GRG), Glu-92, Val-95, and Glu-100. Mg(2+)-binding residues include Asn-192 and Asp-206. Residues Asn-256 and 313 to 315 (GIT) contribute to the substrate site.

This sequence belongs to the succinate/malate CoA ligase beta subunit family. In terms of assembly, heterotetramer of two alpha and two beta subunits. Mg(2+) is required as a cofactor.

It carries out the reaction succinate + ATP + CoA = succinyl-CoA + ADP + phosphate. It catalyses the reaction GTP + succinate + CoA = succinyl-CoA + GDP + phosphate. The protein operates within carbohydrate metabolism; tricarboxylic acid cycle; succinate from succinyl-CoA (ligase route): step 1/1. Succinyl-CoA synthetase functions in the citric acid cycle (TCA), coupling the hydrolysis of succinyl-CoA to the synthesis of either ATP or GTP and thus represents the only step of substrate-level phosphorylation in the TCA. The beta subunit provides nucleotide specificity of the enzyme and binds the substrate succinate, while the binding sites for coenzyme A and phosphate are found in the alpha subunit. In Desulfurococcus amylolyticus (strain DSM 18924 / JCM 16383 / VKM B-2413 / 1221n) (Desulfurococcus kamchatkensis), this protein is Succinate--CoA ligase [ADP-forming] subunit beta.